We begin with the raw amino-acid sequence, 156 residues long: Pilin-like protein PilA1 (156 aa).

A propeptide spans 1-5 (MTRRG) (leader sequence). N-methylleucine is present on Leu6. A helical membrane pass occupies residues 6-29 (LTLLELLLVLGILGVLLGLALPLL).

The protein resides in the cell inner membrane. It is found in the cell outer membrane. It localises to the periplasm. Plays an essential role in natural DNA transformation but is not required for pilus biogenesis. This Thermus thermophilus (strain ATCC BAA-163 / DSM 7039 / HB27) protein is Pilin-like protein PilA1 (pilA1).